Consider the following 356-residue polypeptide: Icosanoyl-CoA 5-desaturase (356 aa).

The chain crosses the membrane as a helical span at residues 5-25 (LYFPISISLSLSLEAMASFIA). The disordered stretch occupies residues 38-58 (LDPKIPTKPEPKTETPKPKDD). The span at 42 to 58 (IPTKPEPKTETPKPKDD) shows a compositional bias: basic and acidic residues. 2 consecutive transmembrane segments (helical) span residues 88 to 108 (NAVTLLVLHALAAMAPFYFSW) and 111 to 131 (FWISFILLGFASGVLGITLCF). The Histidine box-1 signature appears at 132 to 137 (HRCLTH). Positions 169-173 (HRYHH) match the Histidine box-2 motif. The helical transmembrane segment at 236–256 (ALIALLYYVGGFPYIVWGMGF) threads the bilayer. The Histidine box-3 signature appears at 302–306 (HNNHH).

The protein belongs to the fatty acid desaturase type 1 family. Fe(2+) is required as a cofactor.

The protein resides in the membrane. It catalyses the reaction eicosanoyl-CoA + 2 Fe(II)-[cytochrome b5] + O2 + 2 H(+) = (5Z)-eicosenoyl-CoA + 2 Fe(III)-[cytochrome b5] + 2 H2O. The protein operates within lipid metabolism; monounsaturated fatty acid biosynthesis. Desaturase involved in the biosynthesis of (5Z)-icos-5-enoate, an unusual monounsaturated fatty acid that makes up to 60% of the total fatty acids in Limnanthes sp. seed oil. Only acts on saturated fatty acids. The sequence is that of Icosanoyl-CoA 5-desaturase from Limnanthes douglasii (Douglas' meadowfoam).